Consider the following 95-residue polypeptide: uncharacterized protein (95 aa).

Composition is skewed to basic and acidic residues over residues Met1–Cys28 and Asp41–Pro53. Positions Met1–Gln73 are disordered.

This is an uncharacterized protein from Homo sapiens (Human).